We begin with the raw amino-acid sequence, 458 residues long: Acetyl-CoA decarbonylase/synthase complex subunit gamma (458 aa).

The 59-residue stretch at 1-59 (MQVTAMDVYRLLPKTNCGKCNEASCMAFATKLIEKEVTLDDCPQLSGDERQKLENLLAP) folds into the 4Fe-4S domain. Positions 17, 20, 25, and 42 each coordinate [4Fe-4S] cluster.

As to quaternary structure, heterodimer of delta and gamma chains. The ACDS complex is made up of alpha, epsilon, beta, gamma and delta chains with a probable stoichiometry of (alpha(2)epsilon(2))(4)-beta(8)-(gamma(1)delta(1))(8). The cofactor is corrinoid. [4Fe-4S] cluster serves as cofactor.

The enzyme catalyses 5,6,7,8-tetrahydrosarcinapterin + methyl-Co(III)-[corrinoid Fe-S protein] = 5-methyltetrahydrosarcinapterin + Co(I)-[corrinoid Fe-S protein] + H(+). Part of a complex that catalyzes the reversible cleavage of acetyl-CoA, allowing autotrophic growth from CO(2). The chain is Acetyl-CoA decarbonylase/synthase complex subunit gamma from Methanothermobacter thermautotrophicus (strain ATCC 29096 / DSM 1053 / JCM 10044 / NBRC 100330 / Delta H) (Methanobacterium thermoautotrophicum).